A 448-amino-acid chain; its full sequence is MGKLFGTDGIRGIANEELTPELAYQLGRVGAYVLIKGAKDAKVVIGRDTRISGDLLTSAITSGFLSMGVDVIDLGVIPTPAVAYLTRELQGNCGIVISASHNPAEYNGIKFFNHQGYKLPDEIEEQIETYILNNEEIENRVTGAAVGKRIELKEATRLYMDYLKTTIECRFEGLKIAMDLGNGAVYEAAPQLLKELGAEVIIVNDQPDGMNINEGCGSTHPEVVQRLVKENKADVGLSFDGDADRLIAVDNTGAIVDGDSMMAICGTNLNEKHILNKNTIVATVMSNIGLDLAMKEQGCQVVKTKVGDRYVLEEMIKEGYTLGGEQSGHIIFLKYNTTGDGLLTALQLIATVKESGKTLSELSGMMTSYPQVLVNAKVKNENKLAYMEDEVIMGEIKMIEEKMNGVGRVLIRPSGTEPLVRVMLEGQEQAELEVLAHGLAQLIESKLG.

Catalysis depends on Ser100, which acts as the Phosphoserine intermediate. Residues Ser100, Asp240, Asp242, and Asp244 each coordinate Mg(2+). Ser100 carries the phosphoserine modification.

This sequence belongs to the phosphohexose mutase family. It depends on Mg(2+) as a cofactor. Post-translationally, activated by phosphorylation.

It carries out the reaction alpha-D-glucosamine 1-phosphate = D-glucosamine 6-phosphate. Its function is as follows. Catalyzes the conversion of glucosamine-6-phosphate to glucosamine-1-phosphate. The protein is Phosphoglucosamine mutase of Alkaliphilus metalliredigens (strain QYMF).